The primary structure comprises 130 residues: MADNQYYGTGRRKSATARVFAKVGSGDIVINKRSLQDYFSRPTARMVVMQALELVDMTGKLDLYITVAGGGITGQAGAIRHGITRALMQYDESLRPTLRKAGFVTRDARRVERKKVGLHKARKRPQYSKR.

Belongs to the universal ribosomal protein uS9 family.

This is Small ribosomal subunit protein uS9 from Tolumonas auensis (strain DSM 9187 / NBRC 110442 / TA 4).